Consider the following 391-residue polypeptide: Elongation factor Tu (391 aa).

Positions 10 to 201 (KPHVNIGTIG…AVDEYIPTPA (192 aa)) constitute a tr-type G domain. Residues 19–26 (GHVDHGKT) are G1. Position 19–26 (19–26 (GHVDHGKT)) interacts with GTP. Thr26 is a Mg(2+) binding site. The tract at residues 55–59 (GITIS) is G2. Positions 76 to 79 (DCPG) are G3. Residues 76 to 80 (DCPGH) and 131 to 134 (NKVD) each bind GTP. Residues 131–134 (NKVD) are G4. Residues 169 to 171 (SAL) form a G5 region.

The protein belongs to the TRAFAC class translation factor GTPase superfamily. Classic translation factor GTPase family. EF-Tu/EF-1A subfamily. As to quaternary structure, monomer.

Its subcellular location is the cytoplasm. The catalysed reaction is GTP + H2O = GDP + phosphate + H(+). In terms of biological role, GTP hydrolase that promotes the GTP-dependent binding of aminoacyl-tRNA to the A-site of ribosomes during protein biosynthesis. The protein is Elongation factor Tu of Cereibacter sphaeroides (strain ATCC 17025 / ATH 2.4.3) (Rhodobacter sphaeroides).